The primary structure comprises 122 residues: Large ribosomal subunit protein uL14c (122 aa).

Belongs to the universal ribosomal protein uL14 family. As to quaternary structure, part of the 50S ribosomal subunit.

Its subcellular location is the plastid. It is found in the chloroplast. Its function is as follows. Binds to 23S rRNA. The polypeptide is Large ribosomal subunit protein uL14c (Arabis hirsuta (Hairy rock-cress)).